The primary structure comprises 100 residues: Urease subunit gamma (100 aa).

It belongs to the urease gamma subunit family. In terms of assembly, heterotrimer of UreA (gamma), UreB (beta) and UreC (alpha) subunits. Three heterotrimers associate to form the active enzyme.

Its subcellular location is the cytoplasm. It catalyses the reaction urea + 2 H2O + H(+) = hydrogencarbonate + 2 NH4(+). It participates in nitrogen metabolism; urea degradation; CO(2) and NH(3) from urea (urease route): step 1/1. The polypeptide is Urease subunit gamma (Synechococcus sp. (strain CC9902)).